The chain runs to 51 residues: Mitochondrial import receptor subunit TOM5 homolog (51 aa).

Met1 is subject to N-acetylmethionine. A Glycyl lysine isopeptide (Lys-Gly) (interchain with G-Cter in SUMO2) cross-link involves residue Lys10. The chain crosses the membrane as a helical span at residues 27-45; it reads SIRNFLIYVALLRVTPFIL.

It belongs to the Tom5 family. As to quaternary structure, forms part of the preprotein translocase complex of the outer mitochondrial membrane (TOM complex) which consists of at least 7 different proteins (TOMM5, TOMM6, TOMM7, TOMM20, TOMM22, TOMM40 and TOMM70).

The protein localises to the mitochondrion outer membrane. The sequence is that of Mitochondrial import receptor subunit TOM5 homolog from Bos taurus (Bovine).